The following is a 399-amino-acid chain: Succinate--CoA ligase [ADP-forming] subunit beta (399 aa).

Residues 9–254 (KQVLAKYGVP…EDEEDPMELE (246 aa)) form the ATP-grasp domain. Residues lysine 46, 53–55 (GRG), glutamate 109, cysteine 112, and glutamate 117 each bind ATP. Residues asparagine 209 and aspartate 223 each coordinate Mg(2+). Residues asparagine 274 and 331-333 (GIM) contribute to the substrate site.

The protein belongs to the succinate/malate CoA ligase beta subunit family. Heterotetramer of two alpha and two beta subunits. Mg(2+) is required as a cofactor.

The enzyme catalyses succinate + ATP + CoA = succinyl-CoA + ADP + phosphate. It catalyses the reaction GTP + succinate + CoA = succinyl-CoA + GDP + phosphate. Its pathway is carbohydrate metabolism; tricarboxylic acid cycle; succinate from succinyl-CoA (ligase route): step 1/1. Its function is as follows. Succinyl-CoA synthetase functions in the citric acid cycle (TCA), coupling the hydrolysis of succinyl-CoA to the synthesis of either ATP or GTP and thus represents the only step of substrate-level phosphorylation in the TCA. The beta subunit provides nucleotide specificity of the enzyme and binds the substrate succinate, while the binding sites for coenzyme A and phosphate are found in the alpha subunit. The protein is Succinate--CoA ligase [ADP-forming] subunit beta of Rhodospirillum rubrum (strain ATCC 11170 / ATH 1.1.1 / DSM 467 / LMG 4362 / NCIMB 8255 / S1).